We begin with the raw amino-acid sequence, 279 residues long: Fatty acid metabolism regulator protein (279 aa).

One can recognise an HTH gntR-type domain in the interval 6-74; it reads KSPAGFAEKY…HGKPTKVNQF (69 aa). A DNA-binding region (H-T-H motif) is located at residues 34-53; it reads ERELSELIGVTRTTLREVLQ.

As to quaternary structure, homodimer.

The protein resides in the cytoplasm. Multifunctional regulator of fatty acid metabolism. The polypeptide is Fatty acid metabolism regulator protein (Vibrio vulnificus (strain CMCP6)).